The chain runs to 118 residues: Group 1 truncated hemoglobin GlbN (118 aa).

Histidine 70 contacts heme.

Belongs to the truncated hemoglobin family. Group I subfamily. As to quaternary structure, monomer. Heme serves as cofactor.

It localises to the membrane. This is Group 1 truncated hemoglobin GlbN (glbN) from Nostoc commune.